Here is a 695-residue protein sequence, read N- to C-terminus: Elongation factor G (695 aa).

A tr-type G domain is found at 9–283 (EKIRNIGIVA…AVIDYLPSPL (275 aa)). GTP is bound by residues 18 to 25 (AHIDAGKT), 82 to 86 (DTPGH), and 136 to 139 (NKMD).

Belongs to the TRAFAC class translation factor GTPase superfamily. Classic translation factor GTPase family. EF-G/EF-2 subfamily.

It localises to the cytoplasm. Its function is as follows. Catalyzes the GTP-dependent ribosomal translocation step during translation elongation. During this step, the ribosome changes from the pre-translocational (PRE) to the post-translocational (POST) state as the newly formed A-site-bound peptidyl-tRNA and P-site-bound deacylated tRNA move to the P and E sites, respectively. Catalyzes the coordinated movement of the two tRNA molecules, the mRNA and conformational changes in the ribosome. The sequence is that of Elongation factor G from Petrotoga mobilis (strain DSM 10674 / SJ95).